We begin with the raw amino-acid sequence, 74 residues long: UPF0435 protein GWCH70_0415 (74 aa).

It belongs to the UPF0435 family.

In Geobacillus sp. (strain WCH70), this protein is UPF0435 protein GWCH70_0415.